The sequence spans 312 residues: Bark storage protein B (312 aa).

The signal sequence occupies residues 1-24 (MPQQSMQASLRDPIAEIERSNCKI). N70 carries N-linked (GlcNAc...) asparagine glycosylation.

It to wound-inducible poplar endochitinases. Monomer. As to expression, bark tissue.

Its function is as follows. May play a role in nitrogen storage. The polypeptide is Bark storage protein B (BSP) (Populus deltoides (Eastern poplar)).